Reading from the N-terminus, the 231-residue chain is MVIHDLPLKLKDFPMKEKPRERLLKVGAENLANHELLAILLRTGTKHESVLDLSNRLLRSFDGLRLLKEASVEELSSIPGIGMVKAIQILAAVELGSRIHKLANEEHFVIRSPEDGANLVMEDMRFLTQEHFVCLYLNTKNQVIHKRTVFIGSLNSSIVHPREVFKEAFKRSAASFICVHNHPSGDPTPSREDIEVTRRLFECGNLIGIELLDHLVIGDKKFVSLKEKGYL.

One can recognise an MPN domain in the interval 109 to 231; sequence VIRSPEDGAN…FVSLKEKGYL (123 aa). The Zn(2+) site is built by His-180, His-182, and Asp-193. The JAMM motif motif lies at 180–193; it reads HNHPSGDPTPSRED.

This sequence belongs to the UPF0758 family.

This chain is UPF0758 protein YsxA (ysxA), found in Bacillus subtilis (strain 168).